Consider the following 476-residue polypeptide: Cytosolic iron-sulfur assembly component 3 (476 aa).

Ala2 bears the N-acetylalanine mark. [4Fe-4S] cluster is bound by residues Cys24, Cys71, Cys74, Cys77, Cys190, Cys246, Cys395, and Cys399.

This sequence belongs to the NARF family. In terms of assembly, external component of the CIA complex. In the CIA complex, interacts directly with CIAO1 and MMS19.

Functionally, component of the cytosolic iron-sulfur protein assembly (CIA) complex, a multiprotein complex that mediates the incorporation of iron-sulfur cluster into extramitochondrial Fe/S proteins. Seems to negatively regulate the level of HIF1A expression, although this effect could be indirect. The chain is Cytosolic iron-sulfur assembly component 3 from Rattus norvegicus (Rat).